The following is a 269-amino-acid chain: MKRSDRYSNSNEHFEHMKHEPHYNTYYQPVGKPPKKKKSKRILLKILLTILIIIALFIGIMYFLSTRDNVDELRKIENKSSFVSADNVPEYVKGAFISMEDERFYNHHGFDLKGTTRALFSTISDRDVQGGSTITQQVVKNYFYDNDRSFTRKVKELFVAHRVEKQYNKNEILSFYLNNIYFGDNQYTLEGAANHYFGTTVNKNSTTMSHITVLQSAILASKVNAPSVYNINNMSENFTQRVSTNLEKMKQQNYINETQYQQAMSQLNR.

The helical transmembrane segment at 46–66 (ILLTILIIIALFIGIMYFLST) threads the bilayer.

The protein belongs to the glycosyltransferase 51 family.

The protein resides in the cell membrane. It catalyses the reaction [GlcNAc-(1-&gt;4)-Mur2Ac(oyl-L-Ala-gamma-D-Glu-L-Lys-D-Ala-D-Ala)](n)-di-trans,octa-cis-undecaprenyl diphosphate + beta-D-GlcNAc-(1-&gt;4)-Mur2Ac(oyl-L-Ala-gamma-D-Glu-L-Lys-D-Ala-D-Ala)-di-trans,octa-cis-undecaprenyl diphosphate = [GlcNAc-(1-&gt;4)-Mur2Ac(oyl-L-Ala-gamma-D-Glu-L-Lys-D-Ala-D-Ala)](n+1)-di-trans,octa-cis-undecaprenyl diphosphate + di-trans,octa-cis-undecaprenyl diphosphate + H(+). It participates in cell wall biogenesis; peptidoglycan biosynthesis. Its function is as follows. Peptidoglycan polymerase that catalyzes glycan chain elongation using lipid-linked disaccharide-pentapeptide as the substrate. In Staphylococcus aureus (strain JH1), this protein is Monofunctional glycosyltransferase.